Reading from the N-terminus, the 43-residue chain is uncharacterized protein (43 aa).

A helical transmembrane segment spans residues 21-41 (SSFALIVVLFILLIIVGAAIF).

The protein belongs to the SscA family.

Its subcellular location is the membrane. This is an uncharacterized protein from Bacillus subtilis (strain 168).